The following is a 504-amino-acid chain: Myocilin (504 aa).

The N-terminal stretch at 1 to 32 (MRFFCARCCSFGPEMPAVQLLLLACLVWDVGA) is a signal peptide. The N-linked (GlcNAc...) asparagine glycan is linked to N57. A coiled-coil region spans residues 74–184 (LQRDSSTQRL…QEVARLRRGQ (111 aa)). Disordered stretches follow at residues 106 to 131 (QAAR…RDQL) and 170 to 200 (LESS…PGSR). Positions 122–131 (GTLRRERDQL) are enriched in basic and acidic residues. Residues 244-503 (GCGELVWVGE…MVTYDIKLSK (260 aa)) enclose the Olfactomedin-like domain. Residues C245 and C433 are joined by a disulfide bond. Residues D380, N428, A429, I477, and D478 each coordinate Ca(2+). The Microbody targeting signal motif lies at 502 to 504 (SKM).

Homodimer (via N-terminus). Can also form higher oligomers. Interacts with OLFM3, FN1, NRCAM, GLDN and NFASC. Interacts (via N-terminus) with MYL2. Interacts with SFRP1, FRZB, FZD7, FZD10, FZD1 and WIF1; regulates Wnt signaling. Interacts with SNTA1; regulates muscle hypertrophy. Interacts with ERBB2 and ERBB3; activates ERBB2-ERBB3 signaling pathway. Interacts with SNCG; affects its secretion and its aggregation. In terms of processing, different isoforms may arise by post-translational modifications. Glycosylated. Post-translationally, palmitoylated. In terms of processing, undergoes a calcium-dependent proteolytic cleavage at Arg-226 by CAPN2 in the endoplasmic reticulum. The result is the production of two fragments, one of 35 kDa containing the C-terminal olfactomedin-like domain, and another of 20 kDa containing the N-terminal leucine zipper-like domain. Detected in aqueous humor. Detected in the eye (at protein level). Widely expressed. Highly expressed in various types of muscle, ciliary body, papillary sphincter, skeletal muscle, heart, and bone marrow-derived mesenchymal stem cells. Expressed predominantly in the retina. In normal eyes, found in the inner uveal meshwork region and the anterior portion of the meshwork. In contrast, in many glaucomatous eyes, it is found in more regions of the meshwork and seems to be expressed at higher levels than in normal eyes, regardless of the type or clinical severity of glaucoma. The myocilin 35 kDa fragment is detected in aqueous humor and to a lesser extent in iris and ciliary body.

The protein localises to the secreted. It is found in the golgi apparatus. Its subcellular location is the cytoplasmic vesicle. The protein resides in the extracellular space. It localises to the extracellular matrix. The protein localises to the extracellular exosome. It is found in the mitochondrion. Its subcellular location is the mitochondrion intermembrane space. The protein resides in the mitochondrion inner membrane. It localises to the mitochondrion outer membrane. The protein localises to the rough endoplasmic reticulum. It is found in the cell projection. Its subcellular location is the cilium. The protein resides in the endoplasmic reticulum. Functionally, secreted glycoprotein regulating the activation of different signaling pathways in adjacent cells to control different processes including cell adhesion, cell-matrix adhesion, cytoskeleton organization and cell migration. Promotes substrate adhesion, spreading and formation of focal contacts. Negatively regulates cell-matrix adhesion and stress fiber assembly through Rho protein signal transduction. Modulates the organization of actin cytoskeleton by stimulating the formation of stress fibers through interactions with components of Wnt signaling pathways. Promotes cell migration through activation of PTK2 and the downstream phosphatidylinositol 3-kinase signaling. Plays a role in bone formation and promotes osteoblast differentiation in a dose-dependent manner through mitogen-activated protein kinase signaling. Mediates myelination in the peripheral nervous system through ERBB2/ERBB3 signaling. Plays a role as a regulator of muscle hypertrophy through the components of dystrophin-associated protein complex. Involved in positive regulation of mitochondrial depolarization. Plays a role in neurite outgrowth. May participate in the obstruction of fluid outflow in the trabecular meshwork. This Homo sapiens (Human) protein is Myocilin (MYOC).